Consider the following 48-residue polypeptide: Large ribosomal subunit protein bL32 (48 aa).

The span at 1 to 20 (MAVPKRRVSKTRAAKRRTHY) shows a compositional bias: basic residues. The tract at residues 1–48 (MAVPKRRVSKTRAAKRRTHYKVSLPMPVKDKDGSYKMPHRANPTTKEY) is disordered.

This sequence belongs to the bacterial ribosomal protein bL32 family.

This Campylobacter jejuni subsp. doylei (strain ATCC BAA-1458 / RM4099 / 269.97) protein is Large ribosomal subunit protein bL32.